A 522-amino-acid polypeptide reads, in one-letter code: Probable cytosolic Fe-S cluster assembly factor narfl (522 aa).

[4Fe-4S] cluster contacts are provided by Cys26, Cys73, Cys76, Cys79, Cys205, Cys281, Cys439, and Cys443.

This sequence belongs to the NARF family.

In terms of biological role, component of the cytosolic iron-sulfur (Fe/S) protein assembly machinery. Required for maturation of extramitochondrial Fe/S proteins. In Dictyostelium discoideum (Social amoeba), this protein is Probable cytosolic Fe-S cluster assembly factor narfl (narfl).